We begin with the raw amino-acid sequence, 236 residues long: Phosphoribosylaminoimidazole-succinocarboxamide synthase (236 aa).

Belongs to the SAICAR synthetase family.

The catalysed reaction is 5-amino-1-(5-phospho-D-ribosyl)imidazole-4-carboxylate + L-aspartate + ATP = (2S)-2-[5-amino-1-(5-phospho-beta-D-ribosyl)imidazole-4-carboxamido]succinate + ADP + phosphate + 2 H(+). The protein operates within purine metabolism; IMP biosynthesis via de novo pathway; 5-amino-1-(5-phospho-D-ribosyl)imidazole-4-carboxamide from 5-amino-1-(5-phospho-D-ribosyl)imidazole-4-carboxylate: step 1/2. The protein is Phosphoribosylaminoimidazole-succinocarboxamide synthase of Wolinella succinogenes (strain ATCC 29543 / DSM 1740 / CCUG 13145 / JCM 31913 / LMG 7466 / NCTC 11488 / FDC 602W) (Vibrio succinogenes).